Consider the following 364-residue polypeptide: Dual-specificity RNA methyltransferase RlmN (364 aa).

The active-site Proton acceptor is E91. The Radical SAM core domain maps to 97-333 (EDDRGTLCIS…TTTRKTRGDD (237 aa)). A disulfide bridge connects residues C104 and C338. [4Fe-4S] cluster is bound by residues C111, C115, and C118. Residues 164-165 (GE), S196, 218-220 (SLH), and N295 contribute to the S-adenosyl-L-methionine site. The active-site S-methylcysteine intermediate is the C338.

The protein belongs to the radical SAM superfamily. RlmN family. It depends on [4Fe-4S] cluster as a cofactor.

Its subcellular location is the cytoplasm. It carries out the reaction adenosine(2503) in 23S rRNA + 2 reduced [2Fe-2S]-[ferredoxin] + 2 S-adenosyl-L-methionine = 2-methyladenosine(2503) in 23S rRNA + 5'-deoxyadenosine + L-methionine + 2 oxidized [2Fe-2S]-[ferredoxin] + S-adenosyl-L-homocysteine. It catalyses the reaction adenosine(37) in tRNA + 2 reduced [2Fe-2S]-[ferredoxin] + 2 S-adenosyl-L-methionine = 2-methyladenosine(37) in tRNA + 5'-deoxyadenosine + L-methionine + 2 oxidized [2Fe-2S]-[ferredoxin] + S-adenosyl-L-homocysteine. In terms of biological role, specifically methylates position 2 of adenine 2503 in 23S rRNA and position 2 of adenine 37 in tRNAs. m2A2503 modification seems to play a crucial role in the proofreading step occurring at the peptidyl transferase center and thus would serve to optimize ribosomal fidelity. The sequence is that of Dual-specificity RNA methyltransferase RlmN from Dechloromonas aromatica (strain RCB).